A 266-amino-acid chain; its full sequence is 15-hydroxyprostaglandin dehydrogenase [NAD(+)] (266 aa).

NAD(+)-binding positions include 12–20, 36–37, 63–65, and N91; these read GAAQGIGKA, DW, and CDV. Substrate is bound by residues S138 and Q148. Y151 functions as the Proton acceptor in the catalytic mechanism. Residues 151–155 and 186–188 each bind NAD(+); these read YCASK and VKT.

Belongs to the short-chain dehydrogenases/reductases (SDR) family. As to quaternary structure, homodimer.

Its subcellular location is the cytoplasm. It catalyses the reaction prostaglandin E2 + NAD(+) = 15-oxoprostaglandin E2 + NADH + H(+). The enzyme catalyses (15S)-hydroxy-(5Z,8Z,11Z,13E)-eicosatetraenoate + NAD(+) = 15-oxo-(5Z,8Z,11Z,13E)-eicosatetraenoate + NADH + H(+). The catalysed reaction is (11R)-hydroxy-(5Z,8Z,12E,14Z)-eicosatetraenoate + NAD(+) = 11-oxo-(5Z,8Z,12E,14Z)-eicosatetraenoate + NADH + H(+). It carries out the reaction lipoxin A4 + NAD(+) = 15-oxo-(5S,6R)-dihydroxy-(7E,9E,11Z,13E)-eicosatetraenoate + NADH + H(+). It catalyses the reaction 15-oxo-(5S,6R)-dihydroxy-(7E,9E,11Z)-eicosatrienoate + NADH + H(+) = (5S,6R,15S)-trihydroxy-(7E,9E,11Z)-eicosatrienoate + NAD(+). The enzyme catalyses prostaglandin A1 + NAD(+) = 15-oxo-prostaglandin A1 + NADH + H(+). The catalysed reaction is prostaglandin E1 + NAD(+) = 15-oxoprostaglandin E1 + NADH + H(+). It carries out the reaction 14-hydroxy-(4Z,7Z,10Z,12E,16Z,19Z)-docosahexaenoate + NAD(+) = 14-oxo-(4Z,7Z,10Z,12E,16Z,19Z)-docosahexaenoate + NADH + H(+). It catalyses the reaction resolvin E1 + NAD(+) = 18-oxo-resolvin E1 + NADH + H(+). The enzyme catalyses resolvin D1 + NAD(+) = 8-oxoresolvin D1 + NADH + H(+). The catalysed reaction is resolvin D1 + NAD(+) = 17-oxoresolvin D1 + NADH + H(+). It carries out the reaction resolvin D2 + NAD(+) = 7-oxoresolvin D2 + NADH + H(+). It catalyses the reaction resolvin D2 + NAD(+) = 16-oxoresolvin D2 + NADH + H(+). Functionally, catalyzes the NAD-dependent dehydrogenation (oxidation) of a broad array of hydroxylated polyunsaturated fatty acids (mainly eicosanoids and docosanoids, including prostaglandins, lipoxins and resolvins), yielding their corresponding keto (oxo) metabolites. Decreases the levels of the pro-proliferative prostaglandins such as prostaglandin E2 (whose activity is increased in cancer because of an increase in the expression of cyclooxygenase 2) and generates oxo-fatty acid products that can profoundly influence cell function by abrogating pro-inflammatory cytokine expression. Converts resolvins E1, D1 and D2 to their oxo products, which represents a mode of resolvin inactivation. Resolvin E1 plays important roles during the resolution phase of acute inflammation, while resolvins D1 and D2 have a unique role in obesity-induced adipose inflammation. The sequence is that of 15-hydroxyprostaglandin dehydrogenase [NAD(+)] (Hpgd) from Rattus norvegicus (Rat).